Reading from the N-terminus, the 805-residue chain is Leucine--tRNA ligase (805 aa).

The 'HIGH' region motif lies at 39-50; it reads PYPSGKGLHVGH. Residues 583–587 carry the 'KMSKS' region motif; sequence KMSKS. K586 is an ATP binding site.

Belongs to the class-I aminoacyl-tRNA synthetase family.

The protein localises to the cytoplasm. The catalysed reaction is tRNA(Leu) + L-leucine + ATP = L-leucyl-tRNA(Leu) + AMP + diphosphate. This Mycoplasmoides gallisepticum (strain R(low / passage 15 / clone 2)) (Mycoplasma gallisepticum) protein is Leucine--tRNA ligase.